The primary structure comprises 284 residues: 4-diphosphocytidyl-2-C-methyl-D-erythritol kinase (284 aa).

Lys9 is an active-site residue. 92–102 (PMGGGIGGGSS) is a binding site for ATP. The active site involves Asp134.

This sequence belongs to the GHMP kinase family. IspE subfamily.

The catalysed reaction is 4-CDP-2-C-methyl-D-erythritol + ATP = 4-CDP-2-C-methyl-D-erythritol 2-phosphate + ADP + H(+). The protein operates within isoprenoid biosynthesis; isopentenyl diphosphate biosynthesis via DXP pathway; isopentenyl diphosphate from 1-deoxy-D-xylulose 5-phosphate: step 3/6. Functionally, catalyzes the phosphorylation of the position 2 hydroxy group of 4-diphosphocytidyl-2C-methyl-D-erythritol. The polypeptide is 4-diphosphocytidyl-2-C-methyl-D-erythritol kinase (Stutzerimonas stutzeri (strain A1501) (Pseudomonas stutzeri)).